The following is a 426-amino-acid chain: Serine--tRNA ligase (426 aa).

Threonine 231–glutamate 233 serves as a coordination point for L-serine. Residues arginine 262 to glutamate 264 and valine 278 each bind ATP. Residue glutamate 285 participates in L-serine binding. Glutamate 349–serine 352 serves as a coordination point for ATP. An L-serine-binding site is contributed by serine 384.

Belongs to the class-II aminoacyl-tRNA synthetase family. Type-1 seryl-tRNA synthetase subfamily. In terms of assembly, homodimer. The tRNA molecule binds across the dimer.

It is found in the cytoplasm. It carries out the reaction tRNA(Ser) + L-serine + ATP = L-seryl-tRNA(Ser) + AMP + diphosphate + H(+). The enzyme catalyses tRNA(Sec) + L-serine + ATP = L-seryl-tRNA(Sec) + AMP + diphosphate + H(+). It functions in the pathway aminoacyl-tRNA biosynthesis; selenocysteinyl-tRNA(Sec) biosynthesis; L-seryl-tRNA(Sec) from L-serine and tRNA(Sec): step 1/1. Functionally, catalyzes the attachment of serine to tRNA(Ser). Is also able to aminoacylate tRNA(Sec) with serine, to form the misacylated tRNA L-seryl-tRNA(Sec), which will be further converted into selenocysteinyl-tRNA(Sec). This Chlamydia felis (strain Fe/C-56) (Chlamydophila felis) protein is Serine--tRNA ligase.